Consider the following 208-residue polypeptide: Large ribosomal subunit protein uL4 (208 aa).

The segment at 49 to 78 is disordered; it reads HKAKTRAEVRGGGKKPFRQKGTGNARQGST. The segment covering 69 to 78 has biased composition (polar residues); sequence GTGNARQGST.

Belongs to the universal ribosomal protein uL4 family. As to quaternary structure, part of the 50S ribosomal subunit.

Its function is as follows. One of the primary rRNA binding proteins, this protein initially binds near the 5'-end of the 23S rRNA. It is important during the early stages of 50S assembly. It makes multiple contacts with different domains of the 23S rRNA in the assembled 50S subunit and ribosome. Forms part of the polypeptide exit tunnel. The polypeptide is Large ribosomal subunit protein uL4 (Chlorobaculum tepidum (strain ATCC 49652 / DSM 12025 / NBRC 103806 / TLS) (Chlorobium tepidum)).